A 354-amino-acid chain; its full sequence is Guanine nucleotide-binding protein G(i) subunit alpha-3 (354 aa).

Glycine 2 carries N-myristoyl glycine lipidation. Cysteine 3 carries S-palmitoyl cysteine lipidation. The G-alpha domain occupies 32 to 354 (KEVKLLLLGA…KNNLKECGLY (323 aa)). Positions 35–48 (KLLLLGAGESGKST) are G1 motif. Positions 42, 43, 44, 45, 46, 47, 48, 150, 151, 175, 176, 177, 178, 179, 180, 181, 201, 203, 269, 270, 272, 273, 325, 326, and 327 each coordinate GTP. Serine 47 contacts Mg(2+). Residues 173–181 (DVLRTRVKT) are G2 motif. Residue threonine 181 coordinates Mg(2+). The segment at 196–205 (FKMFDVGGQR) is G3 motif. The segment at 265–272 (ILFLNKKD) is G4 motif. The G5 motif stretch occupies residues 324–329 (TCATDT).

This sequence belongs to the G-alpha family. G(i/o/t/z) subfamily. As to quaternary structure, heterotrimeric G proteins are composed of 3 units; alpha, beta and gamma. The alpha subunit contains the guanine nucleotide binding site. GTP binding causes dissociation of the heterotrimer, liberating the individual subunits so that they can interact with downstream effector proteins. Forms a complex with CCDC88A/GIV and EGFR which leads to enhanced EGFR signaling and triggering of cell migration; ligand stimulation is required for recruitment of GNAI3 to the complex. Interacts (inactive GDP-bound form) with CCDC88A/GIV (via GBA motif); the interaction leads to activation of GNAI3. Interacts (inactive GDP-bound form) with CCDC88C/DAPLE (via GBA motif); the interaction leads to activation of GNAI3. Interacts (inactive GDP-bound form) with NUCB1 (via GBA motif) and NUCB2 (via GBA motif); the interaction leads to activation of GNAI3. Interacts (inactive GDP-bound form) with PLCD4 (via GBA motif); the interaction leads to activation of GNAI3. Interacts with INSR; the interaction is probably mediated by CCDC88A/GIV. Interacts with GPSM1. Interacts (GDP-bound form) with GPSM2 (via GoLoco domains). Does not interact with RGS2. Interacts with RGS8 and RGS10; this strongly enhances the intrinsic GTPase activity. Interacts with RGS16; this strongly enhances the intrinsic GTPase activity. Interacts with RGS12. Interacts (via active GTP- or inactive GDP-bound form) with RGS14. Interacts (via active GTP-bound form) with TRPC5 (via ANK repeats) in a homotetrameric ion channel; the interaction is direct and activates the channel activity.

Its subcellular location is the cytoplasm. The protein localises to the cell membrane. The protein resides in the cytoskeleton. It is found in the microtubule organizing center. It localises to the centrosome. Its function is as follows. Heterotrimeric guanine nucleotide-binding proteins (G proteins) function as transducers downstream of G protein-coupled receptors (GPCRs) in numerous signaling cascades. The alpha chain contains the guanine nucleotide binding site and alternates between an active, GTP-bound state and an inactive, GDP-bound state. Signaling by an activated GPCR promotes GDP release and GTP binding. The alpha subunit has a low GTPase activity that converts bound GTP to GDP, thereby terminating the signal. Both GDP release and GTP hydrolysis are modulated by numerous regulatory proteins. Signaling is mediated via effector proteins, such as adenylate cyclase. Inhibits adenylate cyclase activity, leading to decreased intracellular cAMP levels. Stimulates the activity of receptor-regulated K(+) channels. The active GTP-bound form prevents the association of RGS14 with centrosomes and is required for the translocation of RGS14 from the cytoplasm to the plasma membrane. May play a role in cell division. The active GTP-bound form activates the calcium permeant TRPC5 ion channels. This chain is Guanine nucleotide-binding protein G(i) subunit alpha-3 (Gnai3), found in Mus musculus (Mouse).